Here is a 73-residue protein sequence, read N- to C-terminus: UPF0346 protein SAS1364 (73 aa).

It belongs to the UPF0346 family.

The sequence is that of UPF0346 protein SAS1364 from Staphylococcus aureus (strain MSSA476).